The primary structure comprises 109 residues: Nucleoid-associated protein SG0690 (109 aa).

The segment at 1–23 is disordered; sequence MFGKGGMGNLMKQAQQMQEKMQR.

Belongs to the YbaB/EbfC family. Homodimer.

It is found in the cytoplasm. The protein resides in the nucleoid. In terms of biological role, binds to DNA and alters its conformation. May be involved in regulation of gene expression, nucleoid organization and DNA protection. This chain is Nucleoid-associated protein SG0690, found in Sodalis glossinidius (strain morsitans).